The chain runs to 500 residues: Protein-cysteine N-palmitoyltransferase Rasp (500 aa).

10 helical membrane passes run 15–35 (IFVY…KIYG), 73–93 (GDFI…QGFI), 105–125 (FIGV…MVLL), 134–154 (IVSL…WILC), 206–226 (SLVQ…GPII), 243–263 (LGFV…QCAL), 293–313 (FMGQ…IAFA), 372–392 (LTFA…IWSI), 429–449 (LYAM…VYFI), and 461–481 (GAYL…YCFF). H381 is an active-site residue.

Belongs to the membrane-bound acyltransferase family. HHAT subfamily.

It is found in the membrane. The enzyme catalyses N-terminal L-cysteinyl-[protein] + hexadecanoyl-CoA = N-terminal N-hexadecanoyl-L-cysteinyl-[protein] + CoA + H(+). It catalyses the reaction N-terminal L-cysteinyl-[protein]-C-terminal glycyl cholesterol ester + hexadecanoyl-CoA = N-terminal N-hexadecanoyl-L-cysteinyl-[protein]-C-terminal glycyl cholesterol ester + CoA + H(+). In terms of biological role, required in hedgehog (hh) expressing cells for production of appropriate signaling activity in embryos and in the imaginal precursors of adult tissues. Acts within the secretory pathway to catalyze N-terminal palmitoylation of Hh; this lipid modification is required for the embryonic and larval patterning activities of the Hh signal. Not required for Wg signaling. The chain is Protein-cysteine N-palmitoyltransferase Rasp (rasp) from Drosophila melanogaster (Fruit fly).